Consider the following 522-residue polypeptide: Exo-alpha-(1-&gt;6)-L-arabinofuranosidase (522 aa).

3 residues coordinate alpha-L-arabinofuranose: Glu39, Asn84, and Asn185. The active-site Proton donor/acceptor is Glu186. Alpha-L-arabinofuranose-binding residues include Tyr257, Glu310, and Gln370. Catalysis depends on Glu310, which acts as the Nucleophile.

This sequence belongs to the glycosyl hydrolase 51 family. Homohexamer; trimer of dimers.

It catalyses the reaction Hydrolysis of terminal non-reducing alpha-L-arabinofuranoside residues in alpha-L-arabinosides.. The catalysed reaction is (20S)-ginsenoside Rc + H2O = L-arabinofuranose + (20S)-ginsenoside Rd. With respect to regulation, completely inhibited by Cu(2+) and partially inhibited by Co(2+) and Ba(2+). Catalyzes the hydrolysis of p-nitrophenyl-alpha-L-arabinofuranoside (pNP-alphaL-Af) and the hydrolysis of the terminal alpha-L-arabinofuranoside at the C20 position of ginsenoside Rc to produce ginsenoside Rd. Cannot hydrolyze p-nitrophenyl-alpha-L-arabinopyranoside (pNP-alphaL-Ap) and ginsenoside Rb2. This is Exo-alpha-(1-&gt;6)-L-arabinofuranosidase from Bifidobacterium longum.